Consider the following 318-residue polypeptide: Thymidylate synthase (318 aa).

DUMP is bound by residues R25 and 180-181 (RR). C200 serves as the catalytic Nucleophile. DUMP-binding positions include 220–223 (RSGD), N231, and 261–263 (HIY). D223 is a (6R)-5,10-methylene-5,6,7,8-tetrahydrofolate binding site. A (6R)-5,10-methylene-5,6,7,8-tetrahydrofolate-binding site is contributed by A317.

It belongs to the thymidylate synthase family. Bacterial-type ThyA subfamily. As to quaternary structure, homodimer.

The protein localises to the cytoplasm. The enzyme catalyses dUMP + (6R)-5,10-methylene-5,6,7,8-tetrahydrofolate = 7,8-dihydrofolate + dTMP. Its pathway is pyrimidine metabolism; dTTP biosynthesis. Functionally, catalyzes the reductive methylation of 2'-deoxyuridine-5'-monophosphate (dUMP) to 2'-deoxythymidine-5'-monophosphate (dTMP) while utilizing 5,10-methylenetetrahydrofolate (mTHF) as the methyl donor and reductant in the reaction, yielding dihydrofolate (DHF) as a by-product. This enzymatic reaction provides an intracellular de novo source of dTMP, an essential precursor for DNA biosynthesis. The protein is Thymidylate synthase of Lactobacillus johnsonii (strain CNCM I-12250 / La1 / NCC 533).